The chain runs to 132 residues: Fatty acid-binding protein, adipocyte (132 aa).

Positions 22-32 (KELGVGFATRK) match the Nuclear localization signal motif. Residues Arg-107 and Arg-127 each contribute to the (9Z,12Z)-octadecadienoate site.

It belongs to the calycin superfamily. Fatty-acid binding protein (FABP) family. As to quaternary structure, monomer.

The protein localises to the cytoplasm. Its subcellular location is the nucleus. In terms of biological role, lipid transport protein in adipocytes. Binds both long chain fatty acids and retinoic acid. Delivers long-chain fatty acids and retinoic acid to their cognate receptors in the nucleus. Has the highest binding affinity for linoleic acid and decreasing relative affinity for eicosapentaenoic acid (EPA), alpha-linolenic acid (ALA), docosahexaenoic acid (DHA), oleic acid, palmitic acid and stearic acid, respectively. The protein is Fatty acid-binding protein, adipocyte of Pygoscelis papua (Gentoo penguin).